Reading from the N-terminus, the 121-residue chain is Small ribosomal subunit protein uS13 (121 aa).

The disordered stretch occupies residues 94–121; it reads GLPLRGQRTRTNARTRKGPRRAAQALKK.

This sequence belongs to the universal ribosomal protein uS13 family. Part of the 30S ribosomal subunit. Forms a loose heterodimer with protein S19. Forms two bridges to the 50S subunit in the 70S ribosome.

Located at the top of the head of the 30S subunit, it contacts several helices of the 16S rRNA. In the 70S ribosome it contacts the 23S rRNA (bridge B1a) and protein L5 of the 50S subunit (bridge B1b), connecting the 2 subunits; these bridges are implicated in subunit movement. Contacts the tRNAs in the A and P-sites. In Burkholderia mallei (strain NCTC 10247), this protein is Small ribosomal subunit protein uS13.